Reading from the N-terminus, the 838-residue chain is Tuftelin-interacting protein 11 (838 aa).

A compositionally biased stretch (basic and acidic residues) spans 1–13 (MSLSHLYRDGEGH). The tract at residues 1–51 (MSLSHLYRDGEGHLDDDDDDERENFEITDWDLQNEFNPNRQRHWQTKEEAT) is required for interaction with DHX15. Disordered regions lie at residues 1–74 (MSLS…RARD) and 86–137 (LKKG…SGGT). At serine 2 the chain carries Phosphoserine. A compositionally biased stretch (acidic residues) spans 14 to 29 (LDDDDDDERENFEITD). Residues 45–65 (QTKEEATYGVWAERDSDEERP) show a composition bias toward basic and acidic residues. Phosphoserine is present on residues serine 60, serine 96, and serine 99. Positions 92–101 (EEADSEDSDA) are enriched in acidic residues. The span at 102–117 (EEKPVKQEDFPKDLGP) shows a compositional bias: basic and acidic residues. The residue at position 145 (serine 145) is a Phosphoserine. Residues 150–196 (TKGIGQKLLQKMGYVPGRGLGKNAQGIINPIEAKQRKGKGAVGAYGS) form the G-patch domain. The tract at residues 193-237 (AYGSERTTQSLQDFPVADSEEEAEEEFQKELSQWRKDPSGSKKKP) is disordered. Phosphoserine is present on serine 211. Residues 218–232 (EFQKELSQWRKDPSG) are compositionally biased toward basic and acidic residues. The Nuclear localization signal motif lies at 701–706 (VKDKFN). The interval 711–735 (IMNRAVSSNVGAYMQPGARENIAYL) is required for nuclear speckle localization.

This sequence belongs to the TFP11/STIP family. Identified in the spliceosome C complex. Found in the Intron Large (IL) complex, a post-mRNA release spliceosomal complex containing the excised intron, U2, U5 and U6 snRNPs, and splicing factors. Interacts with TUFT1. Interacts with DHX15; indicative for a recruitment of DHX15 to the IL complex. Interacts with GCFC2. Widely expressed. In tooth it is expressed in ameloblasts and odontoblasts.

The protein resides in the cytoplasm. It localises to the nucleus. Its function is as follows. Involved in pre-mRNA splicing, specifically in spliceosome disassembly during late-stage splicing events. Intron turnover seems to proceed through reactions in two lariat-intron associated complexes termed Intron Large (IL) and Intron Small (IS). In cooperation with DHX15 seems to mediate the transition of the U2, U5 and U6 snRNP-containing IL complex to the snRNP-free IS complex leading to efficient debranching and turnover of excised introns. May play a role in the differentiation of ameloblasts and odontoblasts or in the forming of the enamel extracellular matrix. This is Tuftelin-interacting protein 11 (Tfip11) from Mus musculus (Mouse).